A 244-amino-acid polypeptide reads, in one-letter code: Sugar fermentation stimulation protein homolog (244 aa).

This sequence belongs to the SfsA family.

The polypeptide is Sugar fermentation stimulation protein homolog (Dinoroseobacter shibae (strain DSM 16493 / NCIMB 14021 / DFL 12)).